Consider the following 190-residue polypeptide: Zinc finger C2H2 protein ECU03_0790 (190 aa).

C2H2-type zinc fingers lie at residues Arg-4–His-27, Tyr-33–His-55, Tyr-85–His-108, and His-119–His-142.

The polypeptide is Zinc finger C2H2 protein ECU03_0790 (Encephalitozoon cuniculi (strain GB-M1) (Microsporidian parasite)).